A 216-amino-acid chain; its full sequence is Ceramide-1-phosphate transfer protein (216 aa).

Residues D56, K60, R108, R112, and H152 each coordinate an N-acylsphingoid base 1-phosphate.

Belongs to the GLTP family.

It is found in the cytoplasm. Its subcellular location is the cytosol. The protein resides in the golgi apparatus. The protein localises to the trans-Golgi network membrane. It localises to the cell membrane. It is found in the endosome membrane. Its subcellular location is the nucleus outer membrane. The catalysed reaction is N-(hexadecanoyl)-sphing-4-enine-1-phosphate(in) = N-(hexadecanoyl)-sphing-4-enine-1-phosphate(out). It catalyses the reaction N-(9Z-octadecenoyl)-sphing-4-enine-1-phosphate(in) = N-(9Z-octadecenoyl)-sphing-4-enine-1-phosphate(out). In terms of biological role, mediates the intracellular transfer of ceramide-1-phosphate (C1P) between organelle membranes and the cell membrane. Required for normal structure of the Golgi stacks. Can bind phosphoceramides with a variety of aliphatic chains, but has a preference for lipids with saturated C16:0 or monounsaturated C18:1 aliphatic chains, and is inefficient with phosphoceramides containing lignoceryl (C24:0). Plays a role in the regulation of the cellular levels of ceramide-1-phosphate, and thereby contributes to the regulation of phospholipase PLA2G4A activity and the release of arachidonic acid. Has no activity with galactosylceramide, lactosylceramide, sphingomyelin, phosphatidylcholine, phosphatidic acid and ceramide. C1P transfer is stimulated by phosphatidylserine in C1P source vesicles. Regulates autophagy, inflammasome mediated IL1B and IL18 processing, and pyroptosis, but not apoptosis. The sequence is that of Ceramide-1-phosphate transfer protein from Mus musculus (Mouse).